Consider the following 219-residue polypeptide: Endonuclease III (219 aa).

The 20-residue stretch at 117–136 (MEELLTLPGVARKTANVVLA) folds into the HhH domain. [4Fe-4S] cluster is bound by residues Cys-197, Cys-204, Cys-207, and Cys-213.

This sequence belongs to the Nth/MutY family. [4Fe-4S] cluster serves as cofactor.

The catalysed reaction is 2'-deoxyribonucleotide-(2'-deoxyribose 5'-phosphate)-2'-deoxyribonucleotide-DNA = a 3'-end 2'-deoxyribonucleotide-(2,3-dehydro-2,3-deoxyribose 5'-phosphate)-DNA + a 5'-end 5'-phospho-2'-deoxyribonucleoside-DNA + H(+). In terms of biological role, DNA repair enzyme that has both DNA N-glycosylase activity and AP-lyase activity. The DNA N-glycosylase activity releases various damaged pyrimidines from DNA by cleaving the N-glycosidic bond, leaving an AP (apurinic/apyrimidinic) site. The AP-lyase activity cleaves the phosphodiester bond 3' to the AP site by a beta-elimination, leaving a 3'-terminal unsaturated sugar and a product with a terminal 5'-phosphate. The protein is Endonuclease III of Synechocystis sp. (strain ATCC 27184 / PCC 6803 / Kazusa).